Consider the following 192-residue polypeptide: Segregation and condensation protein B (192 aa).

It belongs to the ScpB family. In terms of assembly, homodimer. Homodimerization may be required to stabilize the binding of ScpA to the Smc head domains. Component of a cohesin-like complex composed of ScpA, ScpB and the Smc homodimer, in which ScpA and ScpB bind to the head domain of Smc. The presence of the three proteins is required for the association of the complex with DNA.

It is found in the cytoplasm. In terms of biological role, participates in chromosomal partition during cell division. May act via the formation of a condensin-like complex containing Smc and ScpA that pull DNA away from mid-cell into both cell halves. The sequence is that of Segregation and condensation protein B from Mycoplasma mobile (strain ATCC 43663 / 163K / NCTC 11711) (Mesomycoplasma mobile).